The sequence spans 591 residues: Homeobox domain-containing transcription factor HOB1 (591 aa).

Residues 1–15 show a composition bias toward basic and acidic residues; it reads MEGKNEDMHTPRGPE. Disordered regions lie at residues 1 to 37 and 148 to 168; these read MEGK…DMLG and IAGP…RSPA. A DNA-binding region (homeobox) is located at residues 176-223; it reads IAILRESYARNPNPDRKELERLAARTGRPWNKIREYFRQRRNKLRGLE. 2 disordered regions span residues 420 to 463 and 543 to 563; these read DAGL…PRES and DAIE…ALTE. Acidic residues predominate over residues 427 to 441; it reads QGEEDQPPTVEESDQ. The span at 543–560 shows a compositional bias: basic and acidic residues; that stretch reads DAIERRNAGESKRKRDDA.

It is found in the nucleus. General stress-responsive transcription factor that governs multiple stress responses and adaptations. Plays a key role in virulence. Mediates the expression of LAC1, which is the major laccase involved in melanin synthesis. Positively regulates BZP4 induction under conditions of nutrient starvation and basal expression levels of MBS1 and USV101, 3 major transcription factors that independently contribute to melanin production. Also acts as a key regulator of ergosterol gene expression. This Cryptococcus neoformans var. grubii serotype A (strain H99 / ATCC 208821 / CBS 10515 / FGSC 9487) (Filobasidiella neoformans var. grubii) protein is Homeobox domain-containing transcription factor HOB1.